The sequence spans 436 residues: Nicotinate phosphoribosyltransferase (436 aa).

Position 231 is a phosphohistidine; by autocatalysis (H231).

Belongs to the NAPRTase family. In terms of processing, transiently phosphorylated on a His residue during the reaction cycle. Phosphorylation strongly increases the affinity for substrates and increases the rate of nicotinate D-ribonucleotide production. Dephosphorylation regenerates the low-affinity form of the enzyme, leading to product release.

It catalyses the reaction nicotinate + 5-phospho-alpha-D-ribose 1-diphosphate + ATP + H2O = nicotinate beta-D-ribonucleotide + ADP + phosphate + diphosphate. The protein operates within cofactor biosynthesis; NAD(+) biosynthesis; nicotinate D-ribonucleotide from nicotinate: step 1/1. Catalyzes the synthesis of beta-nicotinate D-ribonucleotide from nicotinate and 5-phospho-D-ribose 1-phosphate at the expense of ATP. The chain is Nicotinate phosphoribosyltransferase from Vibrio campbellii (strain ATCC BAA-1116).